The primary structure comprises 277 residues: Large ribosomal subunit protein mL46 (277 aa).

K217 is subject to N6-succinyllysine. Residue K228 is modified to N6-acetyllysine. K246 is modified (N6-succinyllysine).

Belongs to the mitochondrion-specific ribosomal protein mL46 family. In terms of assembly, component of the mitochondrial ribosome large subunit (39S) which comprises a 16S rRNA and about 50 distinct proteins.

The protein resides in the mitochondrion. In Rattus norvegicus (Rat), this protein is Large ribosomal subunit protein mL46 (Mrpl46).